Reading from the N-terminus, the 975-residue chain is Macrophage colony-stimulating factor 1 receptor 1 (975 aa).

An N-terminal signal peptide occupies residues 1–17 (MQSFLPLLMGIMASASS). Residues 18–519 (VEWRHPVIWF…VEVSDKLFTS (502 aa)) lie on the Extracellular side of the membrane. Ig-like C2-type domains lie at 34–113 (SSEV…VYVK), 125–208 (SLRV…INVI), 221–310 (MDEY…LLVV), 329–407 (GLSV…FHVK), and 404–513 (FHVK…VEVS). 3 disulfides stabilise this stretch: cysteine 49-cysteine 93, cysteine 140-cysteine 189, and cysteine 236-cysteine 292. N-linked (GlcNAc...) asparagine glycosylation is found at asparagine 156, asparagine 165, asparagine 246, asparagine 250, asparagine 289, asparagine 301, asparagine 399, asparagine 420, and asparagine 451. Cysteines 426 and 495 form a disulfide. Residues 520–540 (TLIGAAGVLAIFLLLLVFLLY) form a helical membrane-spanning segment. The Cytoplasmic portion of the chain corresponds to 541–975 (KYKQKPRFEI…LMKTNNYQFC (435 aa)). Residues 544–576 (QKPRFEIRWKIIEAREGNNYTFIDPTQLPYNEK) form a regulatory juxtamembrane domain region. A Phosphotyrosine; by autocatalysis modification is found at tyrosine 563. In terms of domain architecture, Protein kinase spans 584–918 (LKLGKVLGAG…MISQMINRLL (335 aa)). Residues 590 to 598 (LGAGAFGKV) and lysine 619 each bind ATP. Tyrosine 702 and tyrosine 726 each carry phosphotyrosine; by autocatalysis. The active-site Proton acceptor is aspartate 782. The activation loop stretch occupies residues 800–822 (DFGLARDIMNDSNYVVKGNARLP). Phosphotyrosine; by autocatalysis occurs at positions 813 and 929. Residues 939 to 963 (EGEACDEPKRYDPPCERSCDHEEEE) are disordered. Over residues 944-958 (DEPKRYDPPCERSCD) the composition is skewed to basic and acidic residues. Tyrosine 972 carries the phosphotyrosine; by autocatalysis modification.

The protein belongs to the protein kinase superfamily. Tyr protein kinase family. CSF-1/PDGF receptor subfamily. In terms of assembly, monomer. Homodimer. Interacts with CSF1. Post-translationally, autophosphorylated in response to CSF1 binding. autophosphorylation, leading to its degradation. Ubiquitinated. Becomes rapidly polyubiquitinated after autophosphorylation, leading to its degradation.

The protein resides in the cell membrane. It carries out the reaction L-tyrosyl-[protein] + ATP = O-phospho-L-tyrosyl-[protein] + ADP + H(+). Its activity is regulated as follows. Present in an inactive conformation in the absence of bound ligand. CSF1 binding leads to dimerization and activation by autophosphorylation on tyrosine residues. Functionally, tyrosine-protein kinase that acts as a cell-surface receptor for CSF1 and plays an essential role in the regulation of survival, proliferation and differentiation of hematopoietic precursor cells, especially mononuclear phagocytes, such as macrophages and monocytes. Plays an important role in innate immunity and in inflammatory processes. Plays an important role in the regulation of osteoclast proliferation and differentiation, the regulation of bone resorption, and is required for normal bone development. Promotes reorganization of the actin cytoskeleton, regulates formation of membrane ruffles, cell adhesion and cell migration. Activates several signaling pathways in response to ligand binding. This Takifugu rubripes (Japanese pufferfish) protein is Macrophage colony-stimulating factor 1 receptor 1 (csf1r1).